The primary structure comprises 358 residues: Flap endonuclease 1 (358 aa).

Positions 1-103 (MGIKRLSKLI…HEFEKRTKRR (103 aa)) are N-domain. Residue Asp34 participates in Mg(2+) binding. DNA contacts are provided by Arg47 and Arg69. Asp85, Glu157, Glu159, Asp178, and Asp180 together coordinate Mg(2+). The tract at residues 121–252 (LVSKYDRMNV…KRAFEYIKKY (132 aa)) is I-domain. Glu157 is a binding site for DNA. Positions 230 and 232 each coordinate DNA. Asp232 serves as a coordination point for Mg(2+). Residues 346–354 (KQTRIDSFF) form an interaction with PCNA region.

This sequence belongs to the XPG/RAD2 endonuclease family. FEN1 subfamily. In terms of assembly, interacts with PCNA. Three molecules of FEN1 bind to one PCNA trimer with each molecule binding to one PCNA monomer. PCNA stimulates the nuclease activity without altering cleavage specificity. The cofactor is Mg(2+). Phosphorylated. Phosphorylation upon DNA damage induces relocalization to the nuclear plasma.

It is found in the nucleus. The protein resides in the nucleolus. It localises to the nucleoplasm. Its subcellular location is the mitochondrion. Its function is as follows. Structure-specific nuclease with 5'-flap endonuclease and 5'-3' exonuclease activities involved in DNA replication and repair. During DNA replication, cleaves the 5'-overhanging flap structure that is generated by displacement synthesis when DNA polymerase encounters the 5'-end of a downstream Okazaki fragment. It enters the flap from the 5'-end and then tracks to cleave the flap base, leaving a nick for ligation. Also involved in the long patch base excision repair (LP-BER) pathway, by cleaving within the apurinic/apyrimidinic (AP) site-terminated flap. Acts as a genome stabilization factor that prevents flaps from equilibrating into structures that lead to duplications and deletions. Also possesses 5'-3' exonuclease activity on nicked or gapped double-stranded DNA, and exhibits RNase H activity. Also involved in replication and repair of rDNA and in repairing mitochondrial DNA. The protein is Flap endonuclease 1 of Enterocytozoon bieneusi (strain H348) (Microsporidian parasite).